Here is a 204-residue protein sequence, read N- to C-terminus: Thymidylate kinase (204 aa).

Gly11–Thr18 provides a ligand contact to ATP.

The protein belongs to the thymidylate kinase family.

It catalyses the reaction dTMP + ATP = dTDP + ADP. It participates in pyrimidine metabolism; dTTP biosynthesis. The sequence is that of Thymidylate kinase (TMK) from Ectromelia virus (strain Moscow) (ECTV).